Reading from the N-terminus, the 358-residue chain is UDP-N-acetylglucosamine--N-acetylmuramyl-(pentapeptide) pyrophosphoryl-undecaprenol N-acetylglucosamine transferase (358 aa).

Residues 10-12 (TGG), Asn124, Ser196, and Gln293 each bind UDP-N-acetyl-alpha-D-glucosamine.

Belongs to the glycosyltransferase 28 family. MurG subfamily.

It localises to the cell membrane. The catalysed reaction is di-trans,octa-cis-undecaprenyl diphospho-N-acetyl-alpha-D-muramoyl-L-alanyl-D-glutamyl-meso-2,6-diaminopimeloyl-D-alanyl-D-alanine + UDP-N-acetyl-alpha-D-glucosamine = di-trans,octa-cis-undecaprenyl diphospho-[N-acetyl-alpha-D-glucosaminyl-(1-&gt;4)]-N-acetyl-alpha-D-muramoyl-L-alanyl-D-glutamyl-meso-2,6-diaminopimeloyl-D-alanyl-D-alanine + UDP + H(+). Its pathway is cell wall biogenesis; peptidoglycan biosynthesis. Cell wall formation. Catalyzes the transfer of a GlcNAc subunit on undecaprenyl-pyrophosphoryl-MurNAc-pentapeptide (lipid intermediate I) to form undecaprenyl-pyrophosphoryl-MurNAc-(pentapeptide)GlcNAc (lipid intermediate II). This chain is UDP-N-acetylglucosamine--N-acetylmuramyl-(pentapeptide) pyrophosphoryl-undecaprenol N-acetylglucosamine transferase, found in Exiguobacterium sp. (strain ATCC BAA-1283 / AT1b).